The sequence spans 204 residues: Small heat shock protein, chloroplastic (204 aa).

Residues 34–55 (QMGRVDHDHELDDRSNRAPISR) are disordered. Residues 37 to 49 (RVDHDHELDDRSN) are compositionally biased toward basic and acidic residues. One can recognise a sHSP domain in the interval 98 to 204 (GSGRAMRRGW…KKDVFQVMVD (107 aa)).

It belongs to the small heat shock protein (HSP20) family.

Its subcellular location is the plastid. It localises to the chloroplast stroma. The chain is Small heat shock protein, chloroplastic (HSP23) from Oxybasis rubra (Red goosefoot).